The following is a 439-amino-acid chain: MNCEKESQMTIASQSIEDFKECLYQMQEARKSVTNEILETGHIKADQVQIFKSTLEEMNDERTSKNHIRDIHSRGTTFGINIQDEIKGLQKDHHFLDAFAVESDKENNSFANVLKLCDLPGLLSKFVDDEIRFEKEVAECKAFLMDLIDTSTTGGIKPLFITDWDGTMKDYCSQYATNLQPAYSAIVMGVFSRLFTRAFAVLTAGPLRHPGILDLTALPINGPVLFSGSWGREWWLGGRRIVHDDGIPEEGSVAIGQLCEQLDEILHEGEFVQFALVGSGVQRKVDRLTLGVQTVFKQVPEDLSARYIDAVRERIHRVDPNSQYLVLENCSPLEIEVCVHSSGAVWNKGDGVAALVESLHDSLKVGKVCVAGDTASDVPMLKKAADENPENVRALFVNINKQLQENITNIVGDAKRVCFISSPDVAHAAFAQIISEFSG.

Residues Asp163 and Asp165 each coordinate Mg(2+). Residue Asp165 is the Proton donor/acceptor of the active site. 282–284 provides a ligand contact to substrate; sequence QRK. Asp373 is a Mg(2+) binding site.

This sequence belongs to the gob-1 trehalose phosphatase family. Requires Mg(2+) as cofactor. As to expression, ubiquitously expressed. Strong expression in intestine.

It carries out the reaction alpha,alpha-trehalose 6-phosphate + H2O = alpha,alpha-trehalose + phosphate. Its function is as follows. Catalyzes the hydrolysis of trehalose 6-phosphate to trehalose and phosphate; prevents the accumulation of toxic levels of trehalose 6-phosphate. This chain is Trehalose-phosphatase, found in Caenorhabditis elegans.